The chain runs to 356 residues: Malate dehydrogenase, glyoxysomal (356 aa).

The transit peptide at 1–36 (MEDAAAAARRMERLASHLRPPASQMEESPLLRGSNC) directs the protein to the glyoxysome. Residues 51-57 (GASGGIG) and Asp-77 contribute to the NAD(+) site. Substrate is bound by residues Arg-124 and Arg-130. NAD(+) contacts are provided by residues Asn-137 and 160-162 (ISN). Residues Asn-162 and Arg-196 each coordinate substrate. The Proton acceptor role is filled by His-220. Met-271 serves as a coordination point for NAD(+).

This sequence belongs to the LDH/MDH superfamily. MDH type 1 family. In terms of assembly, homodimer.

The protein localises to the glyoxysome. The catalysed reaction is (S)-malate + NAD(+) = oxaloacetate + NADH + H(+). The sequence is that of Malate dehydrogenase, glyoxysomal from Oryza sativa subsp. japonica (Rice).